The sequence spans 732 residues: Polyribonucleotide nucleotidyltransferase (732 aa).

Positions 515 and 521 each coordinate Mg(2+). The region spanning P581–I641 is the KH domain. The S1 motif domain occupies G672 to V731.

Belongs to the polyribonucleotide nucleotidyltransferase family. Mg(2+) is required as a cofactor.

The protein resides in the cytoplasm. The catalysed reaction is RNA(n+1) + phosphate = RNA(n) + a ribonucleoside 5'-diphosphate. Involved in mRNA degradation. Catalyzes the phosphorolysis of single-stranded polyribonucleotides processively in the 3'- to 5'-direction. The sequence is that of Polyribonucleotide nucleotidyltransferase from Campylobacter concisus (strain 13826).